The following is a 482-amino-acid chain: Ribulose bisphosphate carboxylase large chain (482 aa).

The propeptide occupies 1 to 2; that stretch reads MS. Residue proline 3 is modified to N-acetylproline. The residue at position 14 (lysine 14) is an N6,N6,N6-trimethyllysine. Substrate-binding residues include asparagine 123 and threonine 173. Catalysis depends on lysine 175, which acts as the Proton acceptor. Lysine 177 serves as a coordination point for substrate. The Mg(2+) site is built by lysine 201, aspartate 203, and glutamate 204. Lysine 201 carries the post-translational modification N6-carboxylysine. Histidine 294 (proton acceptor) is an active-site residue. Positions 295, 327, and 379 each coordinate substrate.

The protein belongs to the RuBisCO large chain family. Type I subfamily. Heterohexadecamer of 8 large chains and 8 small chains; disulfide-linked. The disulfide link is formed within the large subunit homodimers. Mg(2+) is required as a cofactor. Post-translationally, the disulfide bond which can form in the large chain dimeric partners within the hexadecamer appears to be associated with oxidative stress and protein turnover.

It localises to the plastid. The protein resides in the chloroplast. It catalyses the reaction 2 (2R)-3-phosphoglycerate + 2 H(+) = D-ribulose 1,5-bisphosphate + CO2 + H2O. The enzyme catalyses D-ribulose 1,5-bisphosphate + O2 = 2-phosphoglycolate + (2R)-3-phosphoglycerate + 2 H(+). RuBisCO catalyzes two reactions: the carboxylation of D-ribulose 1,5-bisphosphate, the primary event in carbon dioxide fixation, as well as the oxidative fragmentation of the pentose substrate in the photorespiration process. Both reactions occur simultaneously and in competition at the same active site. The protein is Ribulose bisphosphate carboxylase large chain of Phytolacca americana (American pokeweed).